We begin with the raw amino-acid sequence, 280 residues long: Putative pyruvate, phosphate dikinase regulatory protein 1 (280 aa).

152-159 (GVSRTSKT) contacts ADP.

Belongs to the pyruvate, phosphate/water dikinase regulatory protein family. PDRP subfamily.

The catalysed reaction is N(tele)-phospho-L-histidyl/L-threonyl-[pyruvate, phosphate dikinase] + ADP = N(tele)-phospho-L-histidyl/O-phospho-L-threonyl-[pyruvate, phosphate dikinase] + AMP + H(+). It carries out the reaction N(tele)-phospho-L-histidyl/O-phospho-L-threonyl-[pyruvate, phosphate dikinase] + phosphate + H(+) = N(tele)-phospho-L-histidyl/L-threonyl-[pyruvate, phosphate dikinase] + diphosphate. Bifunctional serine/threonine kinase and phosphorylase involved in the regulation of the pyruvate, phosphate dikinase (PPDK) by catalyzing its phosphorylation/dephosphorylation. This chain is Putative pyruvate, phosphate dikinase regulatory protein 1, found in Latilactobacillus sakei subsp. sakei (strain 23K) (Lactobacillus sakei subsp. sakei).